We begin with the raw amino-acid sequence, 255 residues long: Type III pantothenate kinase (255 aa).

Residue D6–V13 coordinates ATP. Substrate contacts are provided by residues Y100 and G107–R110. D109 (proton acceptor) is an active-site residue. D129 serves as a coordination point for K(+). T132 serves as a coordination point for ATP. T184 contributes to the substrate binding site.

Belongs to the type III pantothenate kinase family. Homodimer. It depends on NH4(+) as a cofactor. Requires K(+) as cofactor.

Its subcellular location is the cytoplasm. The enzyme catalyses (R)-pantothenate + ATP = (R)-4'-phosphopantothenate + ADP + H(+). It functions in the pathway cofactor biosynthesis; coenzyme A biosynthesis; CoA from (R)-pantothenate: step 1/5. In terms of biological role, catalyzes the phosphorylation of pantothenate (Pan), the first step in CoA biosynthesis. The sequence is that of Type III pantothenate kinase from Brevibacillus brevis (strain 47 / JCM 6285 / NBRC 100599).